A 351-amino-acid polypeptide reads, in one-letter code: Photosystem II D2 protein (351 aa).

The chain crosses the membrane as a helical span at residues 39 to 59 (TAYLAIGGWLTGTTFVTSWYT). Histidine 116 contacts chlorophyll a. Residues 123–139 (GFMLRQFELARLIGIRP) form a helical membrane-spanning segment. Pheophytin a is bound by residues glutamine 128 and asparagine 141. The chain crosses the membrane as a helical span at residues 151-164 (VFVSVFLLYPLGQS). Histidine 196 is a binding site for chlorophyll a. Residues 206-226 (GALLSAIHGVTVENTLYEDGE) form a helical membrane-spanning segment. The a plastoquinone site is built by histidine 213 and phenylalanine 260. Histidine 213 is a Fe cation binding site. Histidine 267 contributes to the Fe cation binding site. A helical transmembrane segment spans residues 277-293 (GLWTSSIGIIGLALNLR).

It belongs to the reaction center PufL/M/PsbA/D family. As to quaternary structure, PSII is composed of 1 copy each of membrane proteins PsbA, PsbB, PsbC, PsbD, PsbE, PsbF, PsbH, PsbI, PsbJ, PsbK, PsbL, PsbM, PsbT, PsbX, PsbY, PsbZ, Psb30/Ycf12, peripheral proteins PsbO, CyanoQ (PsbQ), PsbU, PsbV and a large number of cofactors. It forms dimeric complexes. The cofactor is The D1/D2 heterodimer binds P680, chlorophylls that are the primary electron donor of PSII, and subsequent electron acceptors. It shares a non-heme iron and each subunit binds pheophytin, quinone, additional chlorophylls, carotenoids and lipids. There is also a Cl(-1) ion associated with D1 and D2, which is required for oxygen evolution. The PSII complex binds additional chlorophylls, carotenoids and specific lipids..

The protein localises to the host cellular thylakoid membrane. It carries out the reaction 2 a plastoquinone + 4 hnu + 2 H2O = 2 a plastoquinol + O2. Functionally, photosystem II (PSII) is a light-driven water:plastoquinone oxidoreductase that uses light energy to abstract electrons from H(2)O, generating O(2) and a proton gradient subsequently used for ATP formation. It consists of a core antenna complex that captures photons, and an electron transfer chain that converts photonic excitation into a charge separation. The D1/D2 (PsbA/PsbD) reaction center heterodimer binds P680, the primary electron donor of PSII as well as several subsequent electron acceptors. D2 is needed for assembly of a stable PSII complex. The chain is Photosystem II D2 protein (psbD) from Synechococcus.